The sequence spans 287 residues: Uricase (287 aa).

Catalysis depends on charge relay system residues lysine 11 and threonine 58. 7 residues coordinate urate: threonine 58, aspartate 59, phenylalanine 160, arginine 177, valine 219, glutamine 220, and asparagine 246. The active-site Charge relay system is histidine 248. Positions 285 to 287 (SRL) match the Microbody targeting signal motif.

It belongs to the uricase family.

The protein localises to the peroxisome. It catalyses the reaction urate + O2 + H2O = 5-hydroxyisourate + H2O2. It participates in purine metabolism; urate degradation; (S)-allantoin from urate: step 1/3. In terms of biological role, catalyzes the oxidation of uric acid to 5-hydroxyisourate, which is further processed to form (S)-allantoin. The protein is Uricase (uox) of Dictyostelium discoideum (Social amoeba).